Here is a 131-residue protein sequence, read N- to C-terminus: Translation initiation factor 5A (131 aa).

At Lys-36 the chain carries Hypusine.

This sequence belongs to the eIF-5A family.

The protein localises to the cytoplasm. Functionally, functions by promoting the formation of the first peptide bond. The polypeptide is Translation initiation factor 5A (eIF5A) (Metallosphaera sedula (strain ATCC 51363 / DSM 5348 / JCM 9185 / NBRC 15509 / TH2)).